Reading from the N-terminus, the 265-residue chain is Capsule polysaccharide export inner-membrane protein CtrC (265 aa).

Transmembrane regions (helical) follow at residues Ile37–Trp57, Asn64–Trp84, Ile121–Ile141, Ile147–Val167, Phe178–Phe198, and Asn236–Ala256. The ABC transmembrane type-2 domain maps to Ile37–Phe258.

The protein belongs to the ABC-2 integral membrane protein family.

It localises to the cell inner membrane. Functionally, may form an ATP-driven capsule polysaccharide export apparatus, in association with the CtrB and CtrD proteins. The polypeptide is Capsule polysaccharide export inner-membrane protein CtrC (ctrC) (Neisseria meningitidis serogroup A / serotype 4A (strain DSM 15465 / Z2491)).